We begin with the raw amino-acid sequence, 213 residues long: N-(5'-phosphoribosyl)anthranilate isomerase (213 aa).

It belongs to the TrpF family.

It carries out the reaction N-(5-phospho-beta-D-ribosyl)anthranilate = 1-(2-carboxyphenylamino)-1-deoxy-D-ribulose 5-phosphate. Its pathway is amino-acid biosynthesis; L-tryptophan biosynthesis; L-tryptophan from chorismate: step 3/5. In Methylibium petroleiphilum (strain ATCC BAA-1232 / LMG 22953 / PM1), this protein is N-(5'-phosphoribosyl)anthranilate isomerase.